The chain runs to 95 residues: Large ribosomal subunit protein uL23 (95 aa).

The protein belongs to the universal ribosomal protein uL23 family. Part of the 50S ribosomal subunit. Contacts protein L29, and trigger factor when it is bound to the ribosome.

Its function is as follows. One of the early assembly proteins it binds 23S rRNA. One of the proteins that surrounds the polypeptide exit tunnel on the outside of the ribosome. Forms the main docking site for trigger factor binding to the ribosome. In Leuconostoc mesenteroides subsp. mesenteroides (strain ATCC 8293 / DSM 20343 / BCRC 11652 / CCM 1803 / JCM 6124 / NCDO 523 / NBRC 100496 / NCIMB 8023 / NCTC 12954 / NRRL B-1118 / 37Y), this protein is Large ribosomal subunit protein uL23.